Consider the following 631-residue polypeptide: Phosphomethylpyrimidine synthase (631 aa).

Residues Asn-239, Met-268, Tyr-297, His-333, 353–355, 394–397, and Glu-433 contribute to the substrate site; these read SRG and DGLR. His-437 lines the Zn(2+) pocket. Tyr-460 lines the substrate pocket. His-501 is a binding site for Zn(2+). Residues Cys-581, Cys-584, and Cys-589 each coordinate [4Fe-4S] cluster.

This sequence belongs to the ThiC family. In terms of assembly, homodimer. [4Fe-4S] cluster serves as cofactor.

It catalyses the reaction 5-amino-1-(5-phospho-beta-D-ribosyl)imidazole + S-adenosyl-L-methionine = 4-amino-2-methyl-5-(phosphooxymethyl)pyrimidine + CO + 5'-deoxyadenosine + formate + L-methionine + 3 H(+). Its pathway is cofactor biosynthesis; thiamine diphosphate biosynthesis. In terms of biological role, catalyzes the synthesis of the hydroxymethylpyrimidine phosphate (HMP-P) moiety of thiamine from aminoimidazole ribotide (AIR) in a radical S-adenosyl-L-methionine (SAM)-dependent reaction. This is Phosphomethylpyrimidine synthase from Escherichia coli O8 (strain IAI1).